The primary structure comprises 1454 residues: Probable cleavage and polyadenylation specificity factor subunit 1 (1454 aa).

The interval 810–843 is disordered; the sequence is EEKEKKAKQTAAQEKEKETEKKKDDAKNEEDQVN. The segment covering 812-843 has biased composition (basic and acidic residues); that stretch reads KEKKAKQTAAQEKEKETEKKKDDAKNEEDQVN.

The protein belongs to the CPSF1 family. In terms of assembly, CPSF is a heterotetramer composed of four distinct subunits 160 (cpsf-1), 100 (cpsf-2), 70 (cpsf-3), and 30 kDa (cpsf-4).

The protein localises to the nucleus. In terms of biological role, CPSF plays a key role in pre-mRNA 3'-end formation, recognizing the AAUAAA signal sequence and interacting with poly(A)polymerase and other factors to bring about cleavage and poly(A) addition. This subunit is involved in the RNA recognition step of the polyadenylation reaction. This chain is Probable cleavage and polyadenylation specificity factor subunit 1, found in Caenorhabditis briggsae.